Here is a 2035-residue protein sequence, read N- to C-terminus: Envoplakin (2035 aa).

Positions 1–27 (MFKGLSKGSQGKGSPKGSPAKGSPKGS) are enriched in low complexity. Disordered regions lie at residues 1-37 (MFKG…AATQ) and 63-84 (KLQQ…QETG). The globular 1 stretch occupies residues 1 to 841 (MFKGLSKGSQ…LEPALAVSAP (841 aa)). A 4 X 4 AA tandem repeats of K-G-S-P region spans residues 12 to 28 (KGSPKGSPAKGSPKGSP). The span at 71 to 84 (GEQNQALQHQQETG) shows a compositional bias: polar residues. The stretch at 229–330 (YTHLQGCTKQ…LCICQESQLQ (102 aa)) is one Spectrin repeat. The segment at 400 to 419 (QEVAPLPQRRNPSKQPLHVD) is disordered. One can recognise an SH3 domain in the interval 413–470 (KQPLHVDSICDWDSGEVQLLRGERYTLKDNADPYTWLVQGPGGETKSAPAACLCIPAP). A coiled-coil region spans residues 842-1664 (KRLRVISLQE…EKERTLRDLH (823 aa)). Residues 842–1674 (KRLRVISLQE…TKVSREELNQ (833 aa)) form a central fibrous rod domain region. One copy of the Plectin 1 repeat lies at 1186 to 1227 (KQKPKVQLQERVSEIFQVLPETEQEIRRLRAQLQETGSKKSG). Phosphoserine is present on Ser1576. Residues 1607–1631 (KQQKARQLQEEGRLLSQKTESERQK) show a composition bias toward basic and acidic residues. Residues 1607–1637 (KQQKARQLQEEGRLLSQKTESERQKAAQRSQ) form a disordered region. The interval 1675–2035 (ETQTRETNLS…SPTLPRSCVR (361 aa)) is globular 2. One copy of the Plectin 2 repeat lies at 1679-1714 (RETNLSTKICILEPETGNDMSPYEAYKRGVIDRGQY). Ser1800 bears the Phosphoserine mark. 5 Plectin repeats span residues 1819-1856 (FGLT…PITG), 1857-1894 (QKLL…NTST), 1895-1932 (QRLL…QESV), 1933-1970 (LPHL…EDLG), and 1971-2008 (QLLQ…PLSG). At Ser2026 the chain carries Phosphoserine.

Belongs to the plakin or cytolinker family. In terms of assembly, may form a homodimer or a heterodimer with PPL.

Its subcellular location is the cell junction. It localises to the desmosome. The protein resides in the cornified envelope. The protein localises to the cytoplasm. It is found in the cytoskeleton. Component of the cornified envelope of keratinocytes. May link the cornified envelope to desmosomes and intermediate filaments. The polypeptide is Envoplakin (Evpl) (Mus musculus (Mouse)).